Reading from the N-terminus, the 490-residue chain is Glutathione reductase (490 aa).

Residues Ser-19 and Gly-20 each contribute to the FAD site. Ser-19 serves as a coordination point for glutathione. Residue Arg-26 participates in glutathione binding. 4 residues coordinate FAD: Glu-39, Thr-48, Cys-49, and Lys-57. The cysteines at positions 49 and 54 are disulfide-linked. Tyr-110 provides a ligand contact to glutathione. Ala-126 serves as a coordination point for FAD. NADP(+) is bound by residues Ala-208, Ile-211, Glu-214, Arg-231, and Arg-237. Residue Ser-246 participates in glutathione binding. Gly-297 contributes to the NADP(+) binding site. Asp-337 serves as a coordination point for FAD. Glu-343 is a binding site for NADP(+). Thr-345 contacts FAD. Position 353 (Arg-353) interacts with glutathione. Val-379 lines the NADP(+) pocket. Glutathione is bound at residue Lys-432. FAD is bound at residue His-479. His-479 (proton acceptor) is an active-site residue.

This sequence belongs to the class-I pyridine nucleotide-disulfide oxidoreductase family. Homodimer. FAD serves as cofactor.

The protein localises to the cytoplasm. Its subcellular location is the mitochondrion. It carries out the reaction 2 glutathione + NADP(+) = glutathione disulfide + NADPH + H(+). Functionally, catalyzes the reduction of glutathione disulfide (GSSG) to reduced glutathione (GSH). Constitutes the major mechanism to maintain a high GSH:GSSG ratio in the cytosol. This chain is Glutathione reductase (GLR1), found in Debaryomyces hansenii (strain ATCC 36239 / CBS 767 / BCRC 21394 / JCM 1990 / NBRC 0083 / IGC 2968) (Yeast).